Reading from the N-terminus, the 275-residue chain is Hydroxyethylthiazole kinase (275 aa).

Met50 is a binding site for substrate. ATP contacts are provided by Arg126 and Ser171. Ala200 is a substrate binding site.

This sequence belongs to the Thz kinase family. Requires Mg(2+) as cofactor.

It carries out the reaction 5-(2-hydroxyethyl)-4-methylthiazole + ATP = 4-methyl-5-(2-phosphooxyethyl)-thiazole + ADP + H(+). The protein operates within cofactor biosynthesis; thiamine diphosphate biosynthesis; 4-methyl-5-(2-phosphoethyl)-thiazole from 5-(2-hydroxyethyl)-4-methylthiazole: step 1/1. In terms of biological role, catalyzes the phosphorylation of the hydroxyl group of 4-methyl-5-beta-hydroxyethylthiazole (THZ). This chain is Hydroxyethylthiazole kinase, found in Acinetobacter baumannii (strain AB307-0294).